Here is a 285-residue protein sequence, read N- to C-terminus: N-alpha-acetyltransferase 40 (285 aa).

One can recognise an N-acetyltransferase domain in the interval 88 to 274 (INYKLHKSRG…GGGRVVVPCD (187 aa)). Substrate-binding positions include tyrosine 116, 163 to 165 (TEE), and tyrosine 185. Residues 187–189 (VHV) and 195–200 (GHGIGR) each bind acetyl-CoA. Substrate is bound at residue threonine 228. Asparagine 233 contacts acetyl-CoA.

Belongs to the acetyltransferase family. NAA40 subfamily.

The protein resides in the nucleus. It is found in the cytoplasm. The enzyme catalyses N-terminal L-seryl-[histone H4] + acetyl-CoA = N-terminal N(alpha)-acetyl-L-seryl-[histone H4] + CoA + H(+). The catalysed reaction is N-terminal L-seryl-[histone H2A] + acetyl-CoA = N-terminal N(alpha)-acetyl-L-seryl-[histone H2A] + CoA + H(+). N-alpha-acetyltransferase that specifically mediates the acetylation of the N-terminal residues of histones H4 and H2A. The protein is N-alpha-acetyltransferase 40 of Saccharomyces cerevisiae (strain ATCC 204508 / S288c) (Baker's yeast).